The sequence spans 182 residues: Unknown protein 1 (182 aa).

The protein is Unknown protein 1 of Helianthus annuus (Common sunflower).